The following is a 130-amino-acid chain: Small ribosomal subunit protein uS11 (130 aa).

It belongs to the universal ribosomal protein uS11 family. In terms of assembly, part of the 30S ribosomal subunit. Interacts with proteins S7 and S18. Binds to IF-3.

In terms of biological role, located on the platform of the 30S subunit, it bridges several disparate RNA helices of the 16S rRNA. Forms part of the Shine-Dalgarno cleft in the 70S ribosome. This is Small ribosomal subunit protein uS11 from Synechococcus sp. (strain CC9902).